The following is a 1620-amino-acid chain: ALK tyrosine kinase receptor (1620 aa).

The first 18 residues, 1–18, serve as a signal peptide directing secretion; the sequence is MGAIGLLWLLPLLLSTAA. The Extracellular portion of the chain corresponds to 19–1038; it reads VGSGMGTGQR…PHLPLSLILS (1020 aa). The interval 48 to 70 is heparin-binding region; sequence RLQRKSLAVDFVVPSLFRVYARD. Residues Asn-169, Asn-244, Asn-285, Asn-324, Asn-411, Asn-424, Asn-445, Asn-563, Asn-571, and Asn-627 are each glycosylated (N-linked (GlcNAc...) asparagine). The MAM 1 domain occupies 264 to 427; the sequence is LECSFDFPCE…DFFALKNCSE (164 aa). Residues 437 to 473 form the LDL-receptor class A domain; that stretch reads LQSSFTCWNGTVLQLGQACDFHQDCAQGEDESQMCRK. The MAM 2 domain maps to 478 to 636; it reads FYCNFEDGFC…NISISLDCYL (159 aa). Positions 650-674 are disordered; sequence PKSRNLFERNPNKELKPGENSPRQT. A compositionally biased stretch (basic and acidic residues) spans 654-666; it reads NLFERNPNKELKP. Cysteines 688 and 701 form a disulfide. Asn-709 carries an N-linked (GlcNAc...) asparagine glycan. A disulfide bond links Cys-783 and Cys-794. N-linked (GlcNAc...) asparagine glycosylation is found at Asn-808, Asn-863, Asn-864, and Asn-886. Cys-906 and Cys-928 are joined by a disulfide. N-linked (GlcNAc...) asparagine glycosylation is present at Asn-986. Disulfide bonds link Cys-987–Cys-995, Cys-990–Cys-1006, and Cys-1008–Cys-1021. Residues 987–1025 are EGF-like; it reads CSHCEVDECHMDPESHKVICFCDHGTVLAEDGVSCIVSP. The helical transmembrane segment at 1039-1059 threads the bilayer; the sequence is VVTSALVAALVLAFSGIMIVY. Residues 1060 to 1620 are Cytoplasmic-facing; it reads RRKHQELQAM…SKNSMNQPGP (561 aa). Residues Tyr-1078, Tyr-1092, and Tyr-1096 each carry the phosphotyrosine modification. In terms of domain architecture, Protein kinase spans 1116–1392; sequence ITLIRGLGHG…IEYCTQDPDV (277 aa). His-1124 provides a ligand contact to ATP. Tyr-1131 bears the Phosphotyrosine mark. Residues Lys-1150 and 1197 to 1199 each bind ATP; that span reads ELM. Asp-1249 functions as the Proton acceptor in the catalytic mechanism. An ATP-binding site is contributed by Asp-1270. Tyr-1278 is subject to Phosphotyrosine. The interval 1408–1463 is disordered; it reads EEKVPVRPKDPEGVPPLLVSQQAKREEERSPAAPPPLPTTSSGKAAKKPTAAEISV. The span at 1410–1419 shows a compositional bias: basic and acidic residues; it reads KVPVRPKDPE. Tyr-1507 carries the phosphotyrosine modification. Residues 1514-1540 are disordered; it reads KPTKKNNPIAKKEPHDRGNLGLEGSCT. Tyr-1604 carries the post-translational modification Phosphotyrosine.

The protein belongs to the protein kinase superfamily. Tyr protein kinase family. Insulin receptor subfamily. In terms of assembly, homodimer; homodimerizes following heparin- and ligand-binding. Interacts with CBL, IRS1, PIK3R1 and PLCG1. Interacts with FRS2 and SHC1. Interacts with PTN and MDK. In terms of processing, phosphorylated at tyrosine residues by autocatalysis, which activates kinase activity. In cells not stimulated by a ligand, receptor protein tyrosine phosphatase beta and zeta complex (PTPRB/PTPRZ1) dephosphorylates ALK at the sites in ALK that are undergoing autophosphorylation through autoactivation. Phosphorylation at Tyr-1507 is critical for SHC1 association. Post-translationally, N-glycosylated. In terms of tissue distribution, expressed in brain and CNS. Also expressed in the small intestine and testis, but not in normal lymphoid cells.

Its subcellular location is the cell membrane. It catalyses the reaction L-tyrosyl-[protein] + ATP = O-phospho-L-tyrosyl-[protein] + ADP + H(+). Its activity is regulated as follows. Activated upon ALKAL2 ligand-binding. ALKAL2-driven activation is coupled with heparin-binding. Following ligand-binding, homodimerizes and autophosphorylates, activating its kinase activity. Inactivated through dephosphorylation by receptor protein tyrosine phosphatase beta and zeta complex (PTPRB/PTPRZ1) when there is no stimulation by a ligand. Staurosporine, crizotinib and CH5424802 act as inhibitors of ALK kinase activity. Neuronal receptor tyrosine kinase that is essentially and transiently expressed in specific regions of the central and peripheral nervous systems and plays an important role in the genesis and differentiation of the nervous system. Also acts as a key thinness protein involved in the resistance to weight gain: in hypothalamic neurons, controls energy expenditure acting as a negative regulator of white adipose tissue lipolysis and sympathetic tone to fine-tune energy homeostasis. Following activation by ALKAL2 ligand at the cell surface, transduces an extracellular signal into an intracellular response. In contrast, ALKAL1 is not a potent physiological ligand for ALK. Ligand-binding to the extracellular domain induces tyrosine kinase activation, leading to activation of the mitogen-activated protein kinase (MAPK) pathway. Phosphorylates almost exclusively at the first tyrosine of the Y-x-x-x-Y-Y motif. Induces tyrosine phosphorylation of CBL, FRS2, IRS1 and SHC1, as well as of the MAP kinases MAPK1/ERK2 and MAPK3/ERK1. ALK activation may also be regulated by pleiotrophin (PTN) and midkine (MDK). PTN-binding induces MAPK pathway activation, which is important for the anti-apoptotic signaling of PTN and regulation of cell proliferation. MDK-binding induces phosphorylation of the ALK target insulin receptor substrate (IRS1), activates mitogen-activated protein kinases (MAPKs) and PI3-kinase, resulting also in cell proliferation induction. Drives NF-kappa-B activation, probably through IRS1 and the activation of the AKT serine/threonine kinase. Recruitment of IRS1 to activated ALK and the activation of NF-kappa-B are essential for the autocrine growth and survival signaling of MDK. The protein is ALK tyrosine kinase receptor of Homo sapiens (Human).